We begin with the raw amino-acid sequence, 262 residues long: F-actin-capping protein subunit alpha (262 aa).

It belongs to the F-actin-capping protein alpha subunit family. Heterodimer of an alpha and a beta subunit.

In terms of biological role, F-actin-capping proteins bind in a Ca(2+)-independent manner to the fast growing ends of actin filaments (barbed end) thereby blocking the exchange of subunits at these ends. Unlike other capping proteins (such as gelsolin and severin), these proteins do not sever actin filaments. This is F-actin-capping protein subunit alpha (CAP1) from Candida glabrata (strain ATCC 2001 / BCRC 20586 / JCM 3761 / NBRC 0622 / NRRL Y-65 / CBS 138) (Yeast).